A 228-amino-acid polypeptide reads, in one-letter code: UPF0758 protein H16_A3033 (228 aa).

The MPN domain occupies 102 to 224 (GFDGPAAVRN…IRSLADCCDR (123 aa)). Zn(2+) contacts are provided by His-173, His-175, and Asp-186. Residues 173 to 186 (HNHPRGTTAPSQSD) carry the JAMM motif motif.

This sequence belongs to the UPF0758 family.

This chain is UPF0758 protein H16_A3033, found in Cupriavidus necator (strain ATCC 17699 / DSM 428 / KCTC 22496 / NCIMB 10442 / H16 / Stanier 337) (Ralstonia eutropha).